The chain runs to 350 residues: Homoserine O-succinyltransferase (350 aa).

C146 functions as the Acyl-thioester intermediate in the catalytic mechanism. Residues K167 and S196 each coordinate substrate. Catalysis depends on H239, which acts as the Proton acceptor. Residue E241 is part of the active site. Position 253 (R253) interacts with substrate.

This sequence belongs to the MetA family.

Its subcellular location is the cytoplasm. The catalysed reaction is L-homoserine + succinyl-CoA = O-succinyl-L-homoserine + CoA. Its pathway is amino-acid biosynthesis; L-methionine biosynthesis via de novo pathway; O-succinyl-L-homoserine from L-homoserine: step 1/1. Transfers a succinyl group from succinyl-CoA to L-homoserine, forming succinyl-L-homoserine. This chain is Homoserine O-succinyltransferase, found in Cardiobacterium hominis (strain ATCC 15826 / DSM 8339 / NCTC 10426 / 6573).